We begin with the raw amino-acid sequence, 110 residues long: Parvalbumin alpha (110 aa).

Serine 2 is modified (N-acetylserine). Phosphoserine is present on residues serine 2 and serine 24. EF-hand domains follow at residues 39–74 (KSAD…FSPD) and 78–110 (LSAK…VAES). Positions 52, 54, 56, 58, 60, 63, 91, 93, 95, 97, and 102 each coordinate Ca(2+).

In muscle, parvalbumin is thought to be involved in relaxation after contraction. It binds two calcium ions. This is Parvalbumin alpha (PVALB) from Homo sapiens (Human).